Consider the following 110-residue polypeptide: Guanine nucleotide-binding protein subunit gamma (110 aa).

A lipid anchor (S-palmitoyl cysteine) is attached at Cys-106. Cys-107 bears the Cysteine methyl ester mark. A lipid anchor (S-farnesyl cysteine) is attached at Cys-107. Positions 108–110 (TLM) are cleaved as a propeptide — removed in mature form.

It belongs to the G protein gamma family. In terms of assembly, g proteins are composed of 3 units, alpha, beta and gamma. The beta-gamma subunit complex (STE4-STE18 complex) interacts with PLP1 and PLP2.

The protein resides in the membrane. Implicated in the pheromone A- and alpha-factor response pathway. The beta and gamma chains of the putative yeast mating response pathway G protein play a positive role in initiation of the mating response. This is Guanine nucleotide-binding protein subunit gamma (STE18) from Saccharomyces cerevisiae (strain ATCC 204508 / S288c) (Baker's yeast).